The following is a 431-amino-acid chain: MTDQPETFRRRIFSRSSWPEWQRVSELLRTETVGGALLLVAALAALVWANSPWSAGYDQVSDFVVGPHSLHLDLSISAWAADGLLAIFFFVVGVELKREFVVGDLRDPAKAALPIAAAVGGMIVPAVIFVGVNLVAGHTENLGGWAIPVATDIAFALAVLAVIATHLPSALRIFLLTLAVVDDLLAIIVIAVFYTTQLSFGPLAGALVTIAVFGLAVQRGVRTPFLLLPLAVVAWALMHASGVHATVAGVLLGFTIPVLGRHACADRMEHRLRPLSAGFAVPVFAFFAAGVTVGGLSGFASALSHPVTYGVIAGLVLGKPIGVFLTTYVLARFTNASLDEDLAWRDVLGLALLAGIGFTVSLLIGELAFENSPIAHDDAKIAVLTGSVLAGLLAAVVLLSRNAVYRRIHEAETVDADDDGVPDIYQPRQDQ.

The next 11 helical transmembrane spans lie at 33-53 (VGGA…NSPW), 74-94 (LSIS…VVGV), 112-132 (ALPI…FVGV), 144-164 (GWAI…AVIA), 173-193 (IFLL…IAVF), 197-217 (QLSF…GLAV), 225-245 (FLLL…GVHA), 279-299 (FAVP…LSGF), 311-331 (VIAG…YVLA), 347-367 (VLGL…IGEL), and 379-399 (AKIA…VVLL).

This sequence belongs to the NhaA Na(+)/H(+) (TC 2.A.33) antiporter family.

Its subcellular location is the cell membrane. The catalysed reaction is Na(+)(in) + 2 H(+)(out) = Na(+)(out) + 2 H(+)(in). In terms of biological role, na(+)/H(+) antiporter that extrudes sodium in exchange for external protons. In Mycolicibacterium smegmatis (strain ATCC 700084 / mc(2)155) (Mycobacterium smegmatis), this protein is Na(+)/H(+) antiporter NhaA.